The following is a 470-amino-acid chain: ATP synthase subunit beta (470 aa).

Position 157–164 (157–164 (GGAGVGKT)) interacts with ATP.

Belongs to the ATPase alpha/beta chains family. As to quaternary structure, F-type ATPases have 2 components, CF(1) - the catalytic core - and CF(0) - the membrane proton channel. CF(1) has five subunits: alpha(3), beta(3), gamma(1), delta(1), epsilon(1). CF(0) has three main subunits: a(1), b(2) and c(9-12). The alpha and beta chains form an alternating ring which encloses part of the gamma chain. CF(1) is attached to CF(0) by a central stalk formed by the gamma and epsilon chains, while a peripheral stalk is formed by the delta and b chains.

The protein resides in the cell inner membrane. The catalysed reaction is ATP + H2O + 4 H(+)(in) = ADP + phosphate + 5 H(+)(out). In terms of biological role, produces ATP from ADP in the presence of a proton gradient across the membrane. The catalytic sites are hosted primarily by the beta subunits. The chain is ATP synthase subunit beta from Geobacter sp. (strain M21).